Consider the following 702-residue polypeptide: MADS-box MEF2 type transcription factor MIG1 (702 aa).

In terms of domain architecture, MADS-box spans 1–61 (MGRRKIEIKA…KKLYEYSSGD (61 aa)). 2 disordered regions span residues 73–608 (GGAT…NIDT) and 658–702 (PSFL…KVDS). Acidic residues predominate over residues 86 to 96 (GGDDDDEEEGD). Pro residues predominate over residues 132 to 144 (ASPPIPNGVPFPP). Residues 145–155 (HGHGVPRGHTP) show a composition bias toward low complexity. A compositionally biased stretch (polar residues) spans 180-195 (GSPQVNGFGFGQQQSM). Positions 201-241 (TTMPPHMPPQMAPGPPFPYPQHPQHPPHPPHPPHPPHPQQP) are enriched in pro residues. Composition is skewed to low complexity over residues 273-284 (PMGMQRHSVSPP), 326-343 (ESPQ…QQPE), and 350-371 (EQQQ…QSEP). The span at 456–465 (VDESTSNASE) shows a compositional bias: polar residues. 2 stretches are compositionally biased toward low complexity: residues 487–512 (RASI…SLRA) and 530–553 (DGSG…DATS). The segment covering 554-567 (QSTRQNDSHSSTNM) has biased composition (polar residues). Residues 587 to 600 (PPNPFAPKRPPQHP) show a composition bias toward pro residues. A compositionally biased stretch (basic and acidic residues) spans 693-702 (NEPKRVKVDS).

This sequence belongs to the MEF2 family. Interacts with MAPK MPS1.

It is found in the nucleus. Transcription factor acting downstream of the MPS1 MAP kinase (MAPK) cascade during conidiation and plant infection. Required for overcoming plant defense responses and the differentiation of secondary infectious hyphae in live plant cells. This chain is MADS-box MEF2 type transcription factor MIG1, found in Pyricularia oryzae (Rice blast fungus).